Reading from the N-terminus, the 292-residue chain is Bifunctional protein FolD (292 aa).

NADP(+)-binding positions include 165–167 (GRS), Ser-190, and Thr-231.

It belongs to the tetrahydrofolate dehydrogenase/cyclohydrolase family. In terms of assembly, homodimer.

The catalysed reaction is (6R)-5,10-methylene-5,6,7,8-tetrahydrofolate + NADP(+) = (6R)-5,10-methenyltetrahydrofolate + NADPH. The enzyme catalyses (6R)-5,10-methenyltetrahydrofolate + H2O = (6R)-10-formyltetrahydrofolate + H(+). It functions in the pathway one-carbon metabolism; tetrahydrofolate interconversion. Functionally, catalyzes the oxidation of 5,10-methylenetetrahydrofolate to 5,10-methenyltetrahydrofolate and then the hydrolysis of 5,10-methenyltetrahydrofolate to 10-formyltetrahydrofolate. The protein is Bifunctional protein FolD of Arthrobacter globiformis.